Reading from the N-terminus, the 850-residue chain is G-type lectin S-receptor-like serine/threonine-protein kinase CES101 (850 aa).

The N-terminal stretch at 1–22 (MWSNCIFLTLFTFYLFLGQSCC) is a signal peptide. Residues 23–423 (QTDTLLQGQY…IKGSKLAATW (401 aa)) are Extracellular-facing. In terms of domain architecture, Bulb-type lectin spans 24-144 (TDTLLQGQYL…DSDGSMKRTL (121 aa)). N-linked (GlcNAc...) asparagine glycosylation is found at N55, N118, N194, and N374. The PAN domain occupies 334–416 (CSRFGYTFRE…PRTIYIRIKG (83 aa)). 2 disulfides stabilise this stretch: C367–C390 and C371–C377. A helical membrane pass occupies residues 424-444 (LVVVASLFLIIPVTWLIIYLV). The Cytoplasmic segment spans residues 445 to 850 (LRKFKIKGTN…RVTITVMEAR (406 aa)). Residues 527–816 (FSDANKLGEG…ALSLPKEPAF (290 aa)) form the Protein kinase domain. Residues 533 to 541 (LGEGGFGPV) and K555 contribute to the ATP site. The residue at position 561 (S561) is a Phosphoserine. The segment at 616 to 633 (LRKIVLDWKLRFRIMEGI) is caM-binding. Residue D652 is the Proton acceptor of the active site. S669 is subject to Phosphoserine. Residue T686 is modified to Phosphothreonine. Residues S730 and S838 each carry the phosphoserine modification. Residue T845 is modified to Phosphothreonine.

This sequence belongs to the protein kinase superfamily. Ser/Thr protein kinase family. Mostly expressed in leaves, and, to a lower extent, in roots and flowers.

The protein localises to the cell membrane. The catalysed reaction is L-seryl-[protein] + ATP = O-phospho-L-seryl-[protein] + ADP + H(+). It carries out the reaction L-threonyl-[protein] + ATP = O-phospho-L-threonyl-[protein] + ADP + H(+). Its function is as follows. Promotes the expression of genes involved in photosynthesis at least in dedifferentiated calli. This Arabidopsis thaliana (Mouse-ear cress) protein is G-type lectin S-receptor-like serine/threonine-protein kinase CES101 (CES101).